A 301-amino-acid polypeptide reads, in one-letter code: Probable alpha-L-glutamate ligase (301 aa).

Residues 104–287 (LQLLSRRGIG…VAGIIIEHLE (184 aa)) form the ATP-grasp domain. ATP contacts are provided by residues Lys-141, 178 to 179 (EY), Asp-187, and 211 to 213 (RSN). Residues Asp-248, Glu-260, and Asn-262 each coordinate Mg(2+). 3 residues coordinate Mn(2+): Asp-248, Glu-260, and Asn-262.

It belongs to the RimK family. Requires Mg(2+) as cofactor. Mn(2+) serves as cofactor.

This Pseudomonas fluorescens (strain SBW25) protein is Probable alpha-L-glutamate ligase.